We begin with the raw amino-acid sequence, 480 residues long: NADH-quinone oxidoreductase subunit N (480 aa).

Transmembrane regions (helical) follow at residues 12-32 (LLIP…LGVF), 41-61 (LVQW…LFLV), 80-100 (FSKT…MPYL), 105-125 (LGKI…MMMV), 130-150 (LIAM…LAAF), 165-185 (FVLG…VYGF), 204-224 (IGLT…VSAA), 237-257 (APTP…IVLL), 275-295 (VIWM…LTQQ), 300-320 (LMAY…AAAS), 326-346 (ALLV…ATIL), 372-392 (GWSM…VGFF), 406-428 (LMIL…LRIV), and 450-470 (IARI…WLVF).

This sequence belongs to the complex I subunit 2 family. As to quaternary structure, NDH-1 is composed of 14 different subunits. Subunits NuoA, H, J, K, L, M, N constitute the membrane sector of the complex.

It localises to the cell inner membrane. It catalyses the reaction a quinone + NADH + 5 H(+)(in) = a quinol + NAD(+) + 4 H(+)(out). Functionally, NDH-1 shuttles electrons from NADH, via FMN and iron-sulfur (Fe-S) centers, to quinones in the respiratory chain. The immediate electron acceptor for the enzyme in this species is believed to be ubiquinone. Couples the redox reaction to proton translocation (for every two electrons transferred, four hydrogen ions are translocated across the cytoplasmic membrane), and thus conserves the redox energy in a proton gradient. The protein is NADH-quinone oxidoreductase subunit N of Maricaulis maris (strain MCS10) (Caulobacter maris).